A 306-amino-acid chain; its full sequence is 2-phosphoglycerate kinase (306 aa).

The ATP-cone domain maps to 1–90 (MIMVQGEVSG…LWRKIRQCKE (90 aa)).

It belongs to the 2-phosphoglycerate kinase family. A divalent metal cation serves as cofactor.

The enzyme catalyses (2R)-2-phosphoglycerate + ATP = (2R)-2,3-bisphosphoglycerate + ADP + H(+). Its pathway is thermoadapter biosynthesis; cyclic 2,3-diphosphoglycerate biosynthesis; cyclic 2,3-diphosphoglycerate from 2-phospho-D-glycerate: step 1/2. In terms of biological role, catalyzes the phosphorylation of 2-phosphoglycerate to 2,3-diphosphoglycerate. Involved in the biosynthesis of cyclic 2,3-bisphosphoglycerate, a thermoprotectant. This Methanothermobacter thermautotrophicus (strain ATCC 29096 / DSM 1053 / JCM 10044 / NBRC 100330 / Delta H) (Methanobacterium thermoautotrophicum) protein is 2-phosphoglycerate kinase.